The primary structure comprises 158 residues: Ribosomal RNA large subunit methyltransferase H (158 aa).

Residues Leu-72, Gly-103, and 122–127 (LGNLTL) each bind S-adenosyl-L-methionine.

Belongs to the RNA methyltransferase RlmH family. In terms of assembly, homodimer.

The protein localises to the cytoplasm. The enzyme catalyses pseudouridine(1915) in 23S rRNA + S-adenosyl-L-methionine = N(3)-methylpseudouridine(1915) in 23S rRNA + S-adenosyl-L-homocysteine + H(+). Specifically methylates the pseudouridine at position 1915 (m3Psi1915) in 23S rRNA. The chain is Ribosomal RNA large subunit methyltransferase H from Acidiphilium cryptum (strain JF-5).